A 446-amino-acid polypeptide reads, in one-letter code: Phosphoglucosamine mutase (446 aa).

The active-site Phosphoserine intermediate is Ser103. Residues Ser103, Asp242, Asp244, and Asp246 each contribute to the Mg(2+) site. Ser103 bears the Phosphoserine mark.

Belongs to the phosphohexose mutase family. Requires Mg(2+) as cofactor. Post-translationally, activated by phosphorylation.

The catalysed reaction is alpha-D-glucosamine 1-phosphate = D-glucosamine 6-phosphate. Catalyzes the conversion of glucosamine-6-phosphate to glucosamine-1-phosphate. The protein is Phosphoglucosamine mutase of Vibrio vulnificus (strain YJ016).